Reading from the N-terminus, the 941-residue chain is MASNNVAQFATELKMPADVLLTQLRDAGVEKSSTSDELSKADKDKLLEHLRRAHGVAPDGEKKKITLMRKETTEIKQADATGKSRTIQVEVRKKRTFVKRDEPAAEEAPVVVAAPIIDAAEVERRAEESRRHAELMARQEADLREKQERLAKLEAEKETQAKALKKAEVDAQKAEVDAQKAEAEKPVEVKADESAIEEKKRVAAEESKKKAAAAAKEAAKEANEKAAATELARKVVADEVAQIKAMMNAPRRAIKAPEPVAPVAKPAAEGTLHKPADKKPGEKKDEKKPAVTADKKSIKSANVSSTWQDDAKKRSAGIKTRGNTGGGRDGWRAGTKGRRQSHHDDRESNFQAPTEAVVKDVQVPETITVAELAHKMSVKASEVIKQLMKLGQMCTINQVLDQETAMILVEEMGHVAHAAKLDDPEALLEIGAEQADVEALPRAPVVTVMGHVDHGKTSLLDYIRRAKVATGEAGGITQHIGAYHVETPRGMITFLDTPGHEAFTAMRARGAKATDIVILVVAADDGVMPQTKEAIAHAKAAGVPLVVAINKIDKPSANLDRVKQELIAEQVVPEEYGGDSPFVPVSAKTGEGIDALLEQVLLQAEVLELKAPVVSPARGLVVEAKLDKGRGPVATILVQSGTLRRGDVVLAGSAYGRVRAMLDENGKSISEAGPSIPVEIQGLTEVPNAGEEVMVMADERKAREIGLFRQGKFRDVKLAKQQAAKLENMFENMGEGEVKNLPMIIKTDVQGSQEALVGSLQKLSTGEVRVQVVHAAVGGISESDVNLAVASKAVIIGFNTRADASARKLAEANGVDIRYYNIIYDAVDEIKAAMSGMLSPEKREQALGLVEIRQVILVSKVGAIAGCYVLEGVVKRGASVRLLRDNVVIWTGELDSLKRFKDDAKEVKFGFECGLTLKNFNDIKEGDQLEVFEVQEIARTL.

The span at 170–209 (DAQKAEVDAQKAEAEKPVEVKADESAIEEKKRVAAEESKK) shows a compositional bias: basic and acidic residues. 2 disordered regions span residues 170–228 (DAQK…KAAA) and 252–351 (RAIK…SNFQ). Low complexity predominate over residues 256–269 (APEPVAPVAKPAAE). Residues 271–297 (TLHKPADKKPGEKKDEKKPAVTADKKS) show a composition bias toward basic and acidic residues. Over residues 299 to 308 (KSANVSSTWQ) the composition is skewed to polar residues. The 170-residue stretch at 441-610 (PRAPVVTVMG…LLQAEVLELK (170 aa)) folds into the tr-type G domain. Residues 450–457 (GHVDHGKT) are G1. 450 to 457 (GHVDHGKT) lines the GTP pocket. A G2 region spans residues 475-479 (GITQH). Residues 496–499 (DTPG) form a G3 region. Residues 496–500 (DTPGH) and 550–553 (NKID) contribute to the GTP site. Residues 550-553 (NKID) form a G4 region. The tract at residues 586-588 (SAK) is G5.

It belongs to the TRAFAC class translation factor GTPase superfamily. Classic translation factor GTPase family. IF-2 subfamily.

The protein resides in the cytoplasm. In terms of biological role, one of the essential components for the initiation of protein synthesis. Protects formylmethionyl-tRNA from spontaneous hydrolysis and promotes its binding to the 30S ribosomal subunits. Also involved in the hydrolysis of GTP during the formation of the 70S ribosomal complex. In Herminiimonas arsenicoxydans, this protein is Translation initiation factor IF-2.